The chain runs to 549 residues: Glucose-6-phosphate isomerase (549 aa).

The Proton donor role is filled by Glu-355. Catalysis depends on residues His-386 and Lys-514.

The protein belongs to the GPI family.

The protein localises to the cytoplasm. The catalysed reaction is alpha-D-glucose 6-phosphate = beta-D-fructose 6-phosphate. Its pathway is carbohydrate biosynthesis; gluconeogenesis. It participates in carbohydrate degradation; glycolysis; D-glyceraldehyde 3-phosphate and glycerone phosphate from D-glucose: step 2/4. Its function is as follows. Catalyzes the reversible isomerization of glucose-6-phosphate to fructose-6-phosphate. This chain is Glucose-6-phosphate isomerase, found in Klebsiella pneumoniae (strain 342).